Here is a 764-residue protein sequence, read N- to C-terminus: MTIVGHILGFPRIGLHRELKYALEYYWDGKIKEDKLLEIGRTLRIRHWKQQKDSGIDWISVGDFAWYDHVLTTSLMLNNIPDRHRIGQENINLNTLFRISRGYSLDKKLIPPSEMKKWFNTNYHYIVPEFVPNQEFKLNWTQLFDEIDEALSLKYTVKPILLGPISYLWLGKIKGKKFDRLSLLPNLLSVYQEILDILLSKNIDWIQIDEPILVLELPLQWLNAYLSAYEQLHGKVKLLLTTYFDSIYHQLDIITRLKIDGLHVDLVSNPDNIPLLHARLPKHWTLSAGVVNGRNVWKTNLHDWFKKLYPLVGERSLWIGSSCSLLHSPIDLNTEIKLDKHIKEWFAFALQKCYEIKMLCAALNAENTSDATYEDTLSEYYISNNLRSYSSTIHNIQVKKRLEHIDEISYSRSSPYTTRVTLQHKKLNLPLFPTTTIGSFPQTEEIRKLRSRFKNNQINKEDYHLNIKNYIKKIIMEQEKLDLDILVHGEPERNDMVEYFGENLNGFIFTQNGWVQSYGSRCVKPPVIIGDISRSKPITIEWISYAQSLTNKPIKGILTGPVTIMSWSFPREDMQRKTIALQLALSIRDEVIDLEKSGIGIIQIDEPALREGLPLKRSDQKQYLEWAINVFRITVSSVKDDTQIHTHMCYSEFSDIIYAILALDADVISIEAARSDEKILKSIRHVIKNLNEIGPGIYDIHSPNKPTQNDLIRRINQLLKYIPEQRLWINPDCGLKTRSWPEIKHSLNNMVSAAKLLRKQFYSS.

5-methyltetrahydropteroyltri-L-glutamate-binding positions include 17–20 (RELK) and K117. Residues 437-439 (IGS) and E490 each bind L-homocysteine. Residues 437 to 439 (IGS) and E490 each bind L-methionine. 5-methyltetrahydropteroyltri-L-glutamate-binding positions include 521 to 522 (RC) and W567. An L-homocysteine-binding site is contributed by D605. D605 contributes to the L-methionine binding site. E611 is a binding site for 5-methyltetrahydropteroyltri-L-glutamate. Zn(2+) contacts are provided by H647, C649, and E671. H701 functions as the Proton donor in the catalytic mechanism. C733 is a binding site for Zn(2+).

Belongs to the vitamin-B12 independent methionine synthase family. Zn(2+) is required as a cofactor.

The catalysed reaction is 5-methyltetrahydropteroyltri-L-glutamate + L-homocysteine = tetrahydropteroyltri-L-glutamate + L-methionine. Its pathway is amino-acid biosynthesis; L-methionine biosynthesis via de novo pathway; L-methionine from L-homocysteine (MetE route): step 1/1. Its function is as follows. Catalyzes the transfer of a methyl group from 5-methyltetrahydrofolate to homocysteine resulting in methionine formation. In Blochmanniella pennsylvanica (strain BPEN), this protein is 5-methyltetrahydropteroyltriglutamate--homocysteine methyltransferase.